The primary structure comprises 980 residues: GPI inositol-deacylase (980 aa).

Over 1 to 7 (MFMFRNC) the chain is Cytoplasmic. Residues 8–28 (AVLLVIGSICCFIYGLFRLHV) traverse the membrane as a helical segment. Over 29–628 (EVEPNACRMT…EYSYSSALSR (600 aa)) the chain is Lumenal. Residue Ser-170 is part of the active site. N-linked (GlcNAc...) asparagine glycosylation is found at Asn-427, Asn-517, and Asn-596. The chain crosses the membrane as a helical span at residues 629 to 649 (LVLEFYGWLPAHLVCVLLIVL). Residues 650–709 (RKQVETFYDVGTFRSLRPYVGYLQYTSLYIVTACRLLKKLIISSRVFPEPEPLDYSINVS) are Cytoplasmic-facing. The chain crosses the membrane as a helical span at residues 710–730 (IVIHCAAIALSLLATLGTWLA). At 731-774 (LTLYGNAFYRLALRITRLSQATSNVMISIMTHLPITYGILTIAT) the chain is on the lumenal side. Residues 775 to 795 (AMGTCSGVGLLLAFVFYFLML) form a helical membrane-spanning segment. Residues 796–867 (SNAYKDYLED…CVGLQNFSFH (72 aa)) are Cytoplasmic-facing. Residues 821–853 (AVTEQEDATEEQNEEQNALKQNDEQKQQQQEEE) are disordered. The span at 824-834 (EQEDATEEQNE) shows a compositional bias: acidic residues. The chain crosses the membrane as a helical span at residues 868–888 (VTLLLMLFVQLLLNAPSSLAW). The Lumenal segment spans residues 889-895 (LRSRRHG). The helical transmembrane segment at 896–916 (INLPDPSLYPSIVVLASLSLL) threads the bilayer. Over 917-929 (LQLRAPQKCQGYW) the chain is Cytoplasmic. A helical membrane pass occupies residues 930-950 (MLSIAFYILAGVVLLYCQAAI). Residues 951-954 (YRLT) are Lumenal-facing. A helical transmembrane segment spans residues 955–975 (YVIAGAFALLSAHQSLWILWG). Topologically, residues 976–980 (RVSRV) are cytoplasmic.

Belongs to the GPI inositol-deacylase family.

The protein resides in the endoplasmic reticulum membrane. Functionally, involved in inositol deacylation of GPI-anchored proteins. This is GPI inositol-deacylase from Drosophila melanogaster (Fruit fly).